A 469-amino-acid chain; its full sequence is Spliceosome-associated protein CWC27 homolog (469 aa).

S2 is subject to N-acetylserine. Positions T11 to V166 constitute a PPIase cyclophilin-type domain. Over residues T175–K193 the composition is skewed to basic and acidic residues. Disordered regions lie at residues T175–G415 and R428–R469. The stretch at S206–S229 forms a coiled coil. The segment covering S231–H241 has biased composition (basic and acidic residues). The span at T256 to E278 shows a compositional bias: acidic residues. 2 stretches are compositionally biased toward basic and acidic residues: residues G302–E341 and E356–R368. The stretch at A309–Q371 forms a coiled coil. A compositionally biased stretch (polar residues) spans A384–N403. The span at R454–R469 shows a compositional bias: basic and acidic residues.

This sequence belongs to the cyclophilin-type PPIase family. In terms of assembly, part of the activated spliceosome B/catalytic step 1 spliceosome, one of the forms of the spliceosome which has a well-formed active site but still cannot catalyze the branching reaction and is composed at least of 52 proteins, the U2, U5 and U6 snRNAs and the pre-mRNA. Recruited during early steps of activated spliceosome B maturation, it is probably one of the first proteins released from this complex as he matures to the spliceosome C complex. Component of the minor spliceosome, which splices U12-type introns.

Its subcellular location is the nucleus. As part of the spliceosome, plays a role in pre-mRNA splicing. Probable inactive PPIase with no peptidyl-prolyl cis-trans isomerase activity. As a component of the minor spliceosome, involved in the splicing of U12-type introns in pre-mRNAs. The sequence is that of Spliceosome-associated protein CWC27 homolog from Mus musculus (Mouse).